A 308-amino-acid polypeptide reads, in one-letter code: Probable manganese-dependent inorganic pyrophosphatase (308 aa).

6 residues coordinate Mn(2+): H9, D13, D15, D75, H97, and D149.

This sequence belongs to the PPase class C family. Requires Mn(2+) as cofactor.

The protein localises to the cytoplasm. The catalysed reaction is diphosphate + H2O = 2 phosphate + H(+). The polypeptide is Probable manganese-dependent inorganic pyrophosphatase (Listeria monocytogenes serotype 4b (strain CLIP80459)).